The sequence spans 651 residues: Endoplasmic reticulum chaperone BiP (651 aa).

Residues Met-1–Cys-20 form the signal peptide. ATP is bound by residues Gly-36–Tyr-39, Lys-96, Gly-226–Thr-228, Glu-292–Ser-299, and Gly-363–Arg-366. Positions Lys-125 to Lys-279 are nucleotide-binding (NBD). The substrate-binding (SBD) stretch occupies residues Val-399–Thr-499. Residues Lys-648 to Leu-651 carry the Prevents secretion from ER motif.

This sequence belongs to the heat shock protein 70 family.

The protein resides in the endoplasmic reticulum lumen. The catalysed reaction is ATP + H2O = ADP + phosphate + H(+). The chaperone activity is regulated by ATP-induced allosteric coupling of the nucleotide-binding (NBD) and substrate-binding (SBD) domains. In the ADP-bound and nucleotide-free (apo) states, the two domains have little interaction. In contrast, in the ATP-bound state the two domains are tightly coupled, which results in drastically accelerated kinetics in both binding and release of polypeptide substrates. J domain-containing co-chaperones stimulate the ATPase activity and are required for efficient substrate recognition. Endoplasmic reticulum chaperone that plays a key role in protein folding and quality control in the endoplasmic reticulum lumen. Involved in the correct folding of proteins and degradation of misfolded proteins. Acts as a key repressor of the unfolded protein response (UPR). The chain is Endoplasmic reticulum chaperone BiP from Echinococcus granulosus (Hydatid tapeworm).